Reading from the N-terminus, the 158-residue chain is Endoribonuclease YbeY (158 aa).

Residues His118, His122, and His128 each contribute to the Zn(2+) site.

The protein belongs to the endoribonuclease YbeY family. The cofactor is Zn(2+).

Its subcellular location is the cytoplasm. In terms of biological role, single strand-specific metallo-endoribonuclease involved in late-stage 70S ribosome quality control and in maturation of the 3' terminus of the 16S rRNA. The polypeptide is Endoribonuclease YbeY (Bartonella quintana (strain Toulouse) (Rochalimaea quintana)).